Here is a 3430-residue protein sequence, read N- to C-terminus: Genome polyprotein (3430 aa).

The interval 2–15 is interaction with host EXOC1; the sequence is SKKPGGPGKNRAVN. Over 2–105 the chain is Cytoplasmic; sequence SKKPGGPGKN…NRRSTKQKKR (104 aa). A hydrophobic; homodimerization of capsid protein C region spans residues 37–72; that stretch reads LIDGKGPIRFVLALLAFFRFTAIAPTRAVLDRWRGV. Positions 106-123 are cleaved as a propeptide — ER anchor for the capsid protein C, removed in mature form by serine protease NS3; sequence GGTAGFTILLGLIACAGA. Residues 106 to 126 form a helical membrane-spanning segment; sequence GGTAGFTILLGLIACAGAVTL. At 127–248 the chain is on the extracellular side; that stretch reads SNFQGKVMMT…KATRYLVKTE (122 aa). Residue Asn-138 is glycosylated (N-linked (GlcNAc...) asparagine; by host). The chain crosses the membrane as a helical span at residues 249-269; sequence SWILRNPGYALVAAVIGWMLG. Residues 270–275 lie on the Cytoplasmic side of the membrane; the sequence is SNTMQR. Residues 276-290 traverse the membrane as a helical segment; it reads VVFAILLLLVAPAYS. At 291 to 739 the chain is on the extracellular side; sequence FNCLGMSNRD…QVFGGAFRSL (449 aa). 6 cysteine pairs are disulfide-bonded: Cys-293-Cys-320, Cys-350-Cys-406, Cys-364-Cys-395, Cys-382-Cys-411, Cys-476-Cys-574, and Cys-591-Cys-622. The fusion peptide stretch occupies residues 388–401; the sequence is DRGWGNGCGLFGKG. The helical transmembrane segment at 740 to 760 threads the bilayer; sequence FGGMSWITQGLLGALLLWMGI. Over 761-766 the chain is Cytoplasmic; it reads NARDRS. The chain crosses the membrane as a helical span at residues 767–787; sequence IAMTFLAVGGVLLFLSVNVHA. Over 788–1212 the chain is Extracellular; it reads DTGCAIDIGR…AFAEANSGGD (425 aa). Intrachain disulfides connect Cys-791–Cys-802 and Cys-842–Cys-930. 3 N-linked (GlcNAc...) asparagine; by host glycosylation sites follow: Asn-917, Asn-962, and Asn-994. Intrachain disulfides connect Cys-966-Cys-1010, Cys-1067-Cys-1116, Cys-1078-Cys-1099, and Cys-1100-Cys-1103. Residues 1213–1233 traverse the membrane as a helical segment; it reads VVHLALMATFKIQPVFLVASF. The Cytoplasmic portion of the chain corresponds to 1234–1243; the sequence is LKARWTNQES. The helical transmembrane segment at 1244–1264 threads the bilayer; it reads ILLMLAAAFFQMAYYDAKNVL. Residues 1265 to 1278 lie on the Lumenal side of the membrane; the sequence is SWEVPDVLNSLSVA. The helical transmembrane segment at 1279-1299 threads the bilayer; it reads WMILRAISFTNTSNVVVPLLA. The Cytoplasmic portion of the chain corresponds to 1300–1307; it reads LLTPGLKC. A helical transmembrane segment spans residues 1308-1328; sequence LNLDVYRILLLMVGVGSLIKE. Residues 1329–1340 lie on the Lumenal side of the membrane; that stretch reads KRSSAAKKKGAC. The chain crosses the membrane as a helical span at residues 1341-1361; sequence LICLALASTGVFNPMILAAGL. The Cytoplasmic portion of the chain corresponds to 1362-1371; it reads MACDPNRKRG. A helical membrane pass occupies residues 1372-1392; sequence WPATEVMTAVGLMFAIVGGLA. Topologically, residues 1393 to 1395 are lumenal; that stretch reads ELD. Residues 1396–1416 form a helical membrane-spanning segment; that stretch reads IDSMAIPMTIAGLMFAAFVIS. Residues 1417–1473 lie on the Cytoplasmic side of the membrane; the sequence is GKSTDMWIERTADITWESDAEITGSSERVDVRLDDDGNFQLMNDPGAPWKIWMLRMA. The segment at 1424–1463 is interacts with and activates NS3 protease; the sequence is IERTADITWESDAEITGSSERVDVRLDDDGNFQLMNDPGA. An intramembrane region (helical) is located at residues 1474-1494; that stretch reads CLAISAYTPWAILPSVIGFWI. The Cytoplasmic segment spans residues 1495-2170; it reads TLQYTKRGGV…RMALEELPDA (676 aa). One can recognise a Peptidase S7 domain in the interval 1502–1679; it reads GGVLWDTPSP…ERMEEPAPAG (178 aa). Active-site charge relay system; for serine protease NS3 activity residues include His-1552, Asp-1576, and Ser-1636. One can recognise a Helicase ATP-binding domain in the interval 1682-1838; sequence PEMLRKKQIT…ESNAPISDMQ (157 aa). An important for RNA-binding region spans residues 1686-1689; it reads RKKQ. Residue 1695 to 1702 participates in ATP binding; it reads LHPGAGKT. The DEAH box motif lies at 1786 to 1789; sequence DEAH. Residues 1849–2014 enclose the Helicase C-terminal domain; that stretch reads GYEWITEYVG…GLVAQLYQPE (166 aa). The residue at position 1890 (Lys-1890) is an N6-acetyllysine; by host. The segment at 2165-2169 is regulates the ATPase activity of NS3 helicase; sequence EELPD. Residues 2171 to 2191 form a helical membrane-spanning segment; that stretch reads LQTIVLIALLSVMSLGVFFLL. Over 2192 to 2196 the chain is Lumenal; it reads MQRKG. An intramembrane region (helical) is located at residues 2197-2217; it reads IGKIGLGGVILGAATFFCWMA. Glu-2218 is a topological domain (lumenal). A helical transmembrane segment spans residues 2219–2239; the sequence is VPGTKIAGMLLLSLLLMIVLI. Topologically, residues 2240 to 2254 are cytoplasmic; the sequence is PEPEKQRSQTDNQLA. The helical transmembrane segment at 2255-2275 threads the bilayer; the sequence is VFLICVLTLVGAVAANEMGWL. At 2276–2309 the chain is on the lumenal side; the sequence is DKTKNDIGSLLGHRPEARETTLGVESFLLDLRPA. Positions 2310–2330 form an intramembrane region, helical; that stretch reads TAWSLYAVTTAVLTPLLKHLI. Over 2331–2377 the chain is Lumenal; sequence TSDYINTSLTSINVQASALFTLARGFPFVDVGVSALLLAVGCWGQVT. A helical transmembrane segment spans residues 2378–2398; the sequence is LTVTVTAAALLFCHYAYMVPG. The Cytoplasmic segment spans residues 2399 to 2441; the sequence is WQAEAMRSAQRRTAAGIMKNVVVDGIVATDVPELERTTPVMQK. The chain crosses the membrane as a helical span at residues 2442-2462; the sequence is KVGQIILILVSMAAVVVNPSV. Topologically, residues 2463–2467 are lumenal; it reads RTVRE. Residues 2468-2488 form a helical membrane-spanning segment; sequence AGILTTAAAVTLWENGASSVW. Over 2489-3430 the chain is Cytoplasmic; the sequence is NATTAIGLCH…DTIVVEDTVL (942 aa). Residues 2526 to 2791 enclose the mRNA cap 0-1 NS5-type MT domain; sequence GGAKGRTLGE…DVNLGSGTRA (266 aa). Residue Ser-2581 participates in S-adenosyl-L-methionine binding. Ser-2581 is subject to Phosphoserine. Lys-2586 functions as the For 2'-O-MTase activity in the catalytic mechanism. 6 residues coordinate S-adenosyl-L-methionine: Gly-2611, Trp-2612, Thr-2629, Lys-2630, Asp-2656, and Val-2657. Asp-2671 serves as the catalytic For 2'-O-MTase activity. Ile-2672 contributes to the S-adenosyl-L-methionine binding site. Active-site for 2'-O-MTase activity residues include Lys-2707 and Glu-2743. Tyr-2745 is an S-adenosyl-L-methionine binding site. A Nuclear localization signal motif is present at residues 2914–2916; that stretch reads RDK. Zn(2+) contacts are provided by Glu-2965, His-2969, Cys-2974, and Cys-2977. The 153-residue stretch at 3055-3207 folds into the RdRp catalytic domain; the sequence is GKVYADDTAG…KPLDDRFATS (153 aa). Residues His-3242, Cys-3258, and Cys-3377 each coordinate Zn(2+). The PDZ-binding motif lies at 3428–3430; it reads TVL.

In the N-terminal section; belongs to the class I-like SAM-binding methyltransferase superfamily. mRNA cap 0-1 NS5-type methyltransferase family. In terms of assembly, homodimer. Interacts (via N-terminus) with host EXOC1 (via C-terminus); this interaction results in EXOC1 degradation through the proteasome degradation pathway. Interacts with host DDX56; this interaction plays an important role in genomic RNA encapsidation. As to quaternary structure, forms heterodimers with envelope protein E in the endoplasmic reticulum and Golgi. Homodimer; in the endoplasmic reticulum and Golgi. In terms of assembly, homodimer; Homohexamer when secreted. Interacts with envelope protein E. NS1 interacts with NS4B. Interacts with host complement protein CFH; this interaction leads to the degradation of C3. As to quaternary structure, interacts (via N-terminus) with serine protease NS3. Forms a heterodimer with serine protease NS3. May form homooligomers. In terms of assembly, forms a heterodimer with NS2B. Interacts with NS4B. Interacts with unphosphorylated RNA-directed RNA polymerase NS5; this interaction stimulates RNA-directed RNA polymerase NS5 guanylyltransferase activity. As to quaternary structure, interacts with Serine protease/Helicase NS3. Interacts with NS1. Homodimer. Interacts with host STAT2; this interaction inhibits the phosphorylation of the latter, and, when all viral proteins are present (polyprotein), targets STAT2 for degradation. Interacts with host PAF1 complex. Specific enzymatic cleavages in vivo yield mature proteins. Cleavages in the lumen of endoplasmic reticulum are performed by host signal peptidase, whereas cleavages in the cytoplasmic side are performed by serine protease NS3. Signal cleavage at the 2K-4B site requires a prior NS3 protease-mediated cleavage at the 4A-2K site. Post-translationally, cleaved in post-Golgi vesicles by a host furin, releasing the mature small envelope protein M, and peptide pr. This cleavage is incomplete as up to 30% of viral particles still carry uncleaved prM. In terms of processing, not N-glycosylated. N-glycosylated. The excreted form is glycosylated and this is required for efficient secretion of the protein from infected cells. Post-translationally, acetylated by host KAT5. Acetylation modulates NS3 RNA-binding and unwinding activities and plays an important positive role for viral replication. In terms of processing, phosphorylated on serines residues. This phosphorylation may trigger NS5 nuclear localization.

It localises to the virion. Its subcellular location is the host nucleus. The protein localises to the host cytoplasm. It is found in the host perinuclear region. The protein resides in the secreted. It localises to the virion membrane. Its subcellular location is the host endoplasmic reticulum membrane. It carries out the reaction Selective hydrolysis of -Xaa-Xaa-|-Yaa- bonds in which each of the Xaa can be either Arg or Lys and Yaa can be either Ser or Ala.. The enzyme catalyses RNA(n) + a ribonucleoside 5'-triphosphate = RNA(n+1) + diphosphate. The catalysed reaction is a ribonucleoside 5'-triphosphate + H2O = a ribonucleoside 5'-diphosphate + phosphate + H(+). It catalyses the reaction ATP + H2O = ADP + phosphate + H(+). It carries out the reaction a 5'-end (5'-triphosphoguanosine)-ribonucleoside in mRNA + S-adenosyl-L-methionine = a 5'-end (N(7)-methyl 5'-triphosphoguanosine)-ribonucleoside in mRNA + S-adenosyl-L-homocysteine. The enzyme catalyses a 5'-end (N(7)-methyl 5'-triphosphoguanosine)-ribonucleoside in mRNA + S-adenosyl-L-methionine = a 5'-end (N(7)-methyl 5'-triphosphoguanosine)-(2'-O-methyl-ribonucleoside) in mRNA + S-adenosyl-L-homocysteine + H(+). Functionally, plays a role in virus budding by binding to the cell membrane and gathering the viral RNA into a nucleocapsid that forms the core of a mature virus particle. During virus entry, may induce genome penetration into the host cytoplasm after hemifusion induced by the surface proteins. Can migrate to the cell nucleus where it modulates host functions. Overcomes the anti-viral effects of host EXOC1 by sequestering and degrading the latter through the proteasome degradation pathway. Its function is as follows. Inhibits RNA silencing by interfering with host Dicer. Prevents premature fusion activity of envelope proteins in trans-Golgi by binding to envelope protein E at pH6.0. After virion release in extracellular space, gets dissociated from E dimers. In terms of biological role, acts as a chaperone for envelope protein E during intracellular virion assembly by masking and inactivating envelope protein E fusion peptide. prM is the only viral peptide matured by host furin in the trans-Golgi network probably to avoid catastrophic activation of the viral fusion activity in acidic Golgi compartment prior to virion release. prM-E cleavage is inefficient, and many virions are only partially matured. These uncleaved prM would play a role in immune evasion. Functionally, may play a role in virus budding. Exerts cytotoxic effects by activating a mitochondrial apoptotic pathway through M ectodomain. May display a viroporin activity. Its function is as follows. Binds to host cell surface receptor and mediates fusion between viral and cellular membranes. Envelope protein is synthesized in the endoplasmic reticulum in the form of heterodimer with protein prM. They play a role in virion budding in the ER, and the newly formed immature particle is covered with 60 spikes composed of heterodimer between precursor prM and envelope protein E. The virion is transported to the Golgi apparatus where the low pH causes dissociation of PrM-E heterodimers and formation of E homodimers. prM-E cleavage is inefficient, and many virions are only partially matured. These uncleaved prM would play a role in immune evasion. Involved in immune evasion, pathogenesis and viral replication. Once cleaved off the polyprotein, is targeted to three destinations: the viral replication cycle, the plasma membrane and the extracellular compartment. Essential for viral replication. Required for formation of the replication complex and recruitment of other non-structural proteins to the ER-derived membrane structures. Excreted as a hexameric lipoparticle that plays a role against host immune response. Antagonizing the complement function. Binds to the host macrophages and dendritic cells. Inhibits signal transduction originating from Toll-like receptor 3 (TLR3). In terms of biological role, component of the viral RNA replication complex that functions in virion assembly and antagonizes the host alpha/beta interferon antiviral response. Functionally, required cofactor for the serine protease function of NS3. May have membrane-destabilizing activity and form viroporins. Its function is as follows. Displays three enzymatic activities: serine protease, NTPase and RNA helicase. NS3 serine protease, in association with NS2B, performs its autocleavage and cleaves the polyprotein at dibasic sites in the cytoplasm: C-prM, NS2A-NS2B, NS2B-NS3, NS3-NS4A, NS4A-2K and NS4B-NS5. NS3 RNA helicase binds RNA and unwinds dsRNA in the 3' to 5' direction. NS3 supports the separation of RNA daughter and template strands during viral replication. The helicase part is involved in the inhibition of phosphorylation of host STAT1, and thereby inhibition of host type-I IFN signaling. In addition, NS3 assists the initiation of replication by unwinding the RNA secondary structure in the 3' non-translated region (NTR). Inhibits STAT2 translocation in the nucleus after IFN-alpha treatment. Regulates the ATPase activity of the NS3 helicase activity. NS4A allows NS3 helicase to conserve energy during unwinding. In terms of biological role, functions as a signal peptide for NS4B and is required for the interferon antagonism activity of the latter. Functionally, induces the formation of ER-derived membrane vesicles where the viral replication takes place. Inhibits interferon (IFN)-induced host STAT1 phosphorylation and nuclear translocation, thereby preventing the establishment of cellular antiviral state by blocking the IFN-alpha/beta pathway. Inhibits STAT2 translocation in the nucleus after IFN-alpha treatment. Its function is as follows. Replicates the viral (+) and (-) RNA genome, and performs the capping of genomes in the cytoplasm. NS5 methylates viral RNA cap at guanine N-7 and ribose 2'-O positions. Besides its role in RNA genome replication, also prevents the establishment of cellular antiviral state by blocking the interferon-alpha/beta (IFN-alpha/beta) signaling pathway. Inhibits host TYK2 and STAT2 phosphorylation, thereby preventing activation of JAK-STAT signaling pathway. The polypeptide is Genome polyprotein (Aedes (Tropical bont tick)).